We begin with the raw amino-acid sequence, 427 residues long: MPALVLIGAQWGDEGKGKATDLLGGAVDYVVRYQGGNNAGHTVVIGAESYALHLIPSGVLRTDCVPVIGNGVVIDPGVLLSEMDGLQARGVDVSRLLISADAHLIMPHHRALDRVTERYLGKARIGTTGRGIGPAYGDKVARTGIRVQDLLDPGIFRQKLELALREKNQVLTKVYNRRRIEVDEVVEEYAAYAERLTPHIADTGLLLDTALREGKVVLLEGSQGTLLDVDHGTYPFVTSSNPTAGYAATGAGIGPTRINRVIGIIKAYTTRVGAGPFPTELDDKVGEELRRIGGEFGVTTGRARRTGWFDAVIARYAVRVNGLTDLFLTKLDVLSGFDTVPVCVGYEINGQRTDEMPMTQTEFHHAKPIYVELPGWHEDISGVTRFADLPEAAQAYVATLEEMAGAPVSAVGVGPGRAQTLVINELI.

Residues 12-18 (GDEGKGK) and 40-42 (GHT) contribute to the GTP site. The active-site Proton acceptor is Asp-13. Mg(2+) is bound by residues Asp-13 and Gly-40. Residues 13–16 (DEGK), 38–41 (NAGH), Thr-128, Arg-142, Gln-223, Thr-238, and Arg-302 each bind IMP. The active-site Proton donor is the His-41. 298-304 (VTTGRAR) serves as a coordination point for substrate. Residues Arg-304, 330–332 (KLD), and 412–414 (GVG) contribute to the GTP site.

Belongs to the adenylosuccinate synthetase family. Homodimer. The cofactor is Mg(2+).

It localises to the cytoplasm. It catalyses the reaction IMP + L-aspartate + GTP = N(6)-(1,2-dicarboxyethyl)-AMP + GDP + phosphate + 2 H(+). It functions in the pathway purine metabolism; AMP biosynthesis via de novo pathway; AMP from IMP: step 1/2. Plays an important role in the de novo pathway of purine nucleotide biosynthesis. Catalyzes the first committed step in the biosynthesis of AMP from IMP. In Parafrankia sp. (strain EAN1pec), this protein is Adenylosuccinate synthetase.